The chain runs to 474 residues: GTPase Der (474 aa).

2 EngA-type G domains span residues leucine 2–glutamate 166 and leucine 212–serine 385. GTP-binding positions include glycine 8–serine 15, aspartate 55–valine 59, asparagine 118–aspartate 121, glycine 218–serine 225, aspartate 265–leucine 269, and asparagine 330–aspartate 333. Residues serine 386 to threonine 470 enclose the KH-like domain.

The protein belongs to the TRAFAC class TrmE-Era-EngA-EngB-Septin-like GTPase superfamily. EngA (Der) GTPase family. In terms of assembly, associates with the 50S ribosomal subunit.

Its function is as follows. GTPase that plays an essential role in the late steps of ribosome biogenesis. In Chlamydia abortus (strain DSM 27085 / S26/3) (Chlamydophila abortus), this protein is GTPase Der.